The primary structure comprises 200 residues: Anthranilate synthase component 2, pyocyanine specific (200 aa).

The Glutamine amidotransferase type-1 domain occupies 2 to 195 (RITLLDNFDS…LLWCGALAVR (194 aa)). 56–58 (GPG) is an L-glutamine binding site. Cysteine 83 acts as the Nucleophile; for GATase activity in catalysis. L-glutamine-binding positions include glutamine 87 and 133–134 (SL). Active-site for GATase activity residues include histidine 169 and glutamate 171.

As to quaternary structure, heterotetramer consisting of two non-identical subunits: a beta subunit (PhnB) and a large alpha subunit (PhnA).

It catalyses the reaction chorismate + L-glutamine = anthranilate + pyruvate + L-glutamate + H(+). The protein operates within secondary metabolite biosynthesis; pyocyanine biosynthesis. Part of a heterotetrameric complex that catalyzes the two-step biosynthesis of anthranilate, a precursor for Pseudomonas quinolone signal (2-heptyl-3-hydroxy-4-quinolone; PQS) production which is required to induce the genes for the biosynthesis of the virulence factor pyocyanine (PCN), a characteristic blue-green phenazine pigment produced by P.aeruginosa. In the first step, the glutamine-binding beta subunit (PhnB) of anthranilate synthase (AS) provides the glutamine amidotransferase activity which generates ammonia as a substrate that, along with chorismate, is used in the second step, catalyzed by the large alpha subunit of AS (PhnA) to produce anthranilate. The chain is Anthranilate synthase component 2, pyocyanine specific from Pseudomonas aeruginosa (strain ATCC 15692 / DSM 22644 / CIP 104116 / JCM 14847 / LMG 12228 / 1C / PRS 101 / PAO1).